The primary structure comprises 1020 residues: Calcium-transporting ATPase 10, plasma membrane-type (1020 aa).

Residues 1 to 175 (MESYLEENFG…FVWEALQDTT (175 aa)) are Cytoplasmic-facing. The tract at residues 21-32 (ALRRWRKLCGVV) is interaction with calmodulin. Transmembrane regions (helical) follow at residues 176 to 196 (LIILAVCAFVSLVVGIAMEGW) and 199 to 219 (GAHDGLGIVASILLVVFVTAT). The Cytoplasmic portion of the chain corresponds to 220 to 263 (SDYRQSLQFKDLDKEKKKIQVQVTRNGFRQRLSIYDLLPGDVVH). 2 helical membrane-spanning segments follow: residues 264 to 284 (LAIGDQVPADGLFISGFSLLI) and 352 to 372 (GVATIIGKIGLFFAVITFIVL). Topologically, residues 373 to 400 (SQGLISKKYHEGLLLSWSGDDALEMLEH) are cytoplasmic. A helical membrane pass occupies residues 401–421 (FAIAVTIVVVAVPEGLPLAVT). The active-site 4-aspartylphosphate intermediate is the Asp-456. Asp-758 and Asp-762 together coordinate Mg(2+). A helical transmembrane segment spans residues 843–863 (LTAVQLLWVNMIMDTLGALAL). The Cytoplasmic portion of the chain corresponds to 864–887 (ATEPPNDDLMKREPVGRTGKFITN). 2 helical membrane-spanning segments follow: residues 888–907 (VMWRNILGQSFYQFIVMWYL) and 924–944 (VVLNTIIFNSFVFCQVFNEIS). The Cytoplasmic portion of the chain corresponds to 945–961 (SREMEKINVLRGILKNY). 2 helical membrane passes run 962–982 (VFLGVLTSTVVFQFIMVQFLG) and 995–1015 (WIASVLLGLIGMPISAIIKLL). Over 1016–1020 (PVGSS) the chain is Cytoplasmic.

Belongs to the cation transport ATPase (P-type) (TC 3.A.3) family. Type IIB subfamily.

It localises to the membrane. It catalyses the reaction Ca(2+)(in) + ATP + H2O = Ca(2+)(out) + ADP + phosphate + H(+). Activated by calmodulin. In terms of biological role, this magnesium-dependent enzyme catalyzes the hydrolysis of ATP coupled with the translocation of calcium from the cytosol out of the cell, into the endoplasmic reticulum, or into organelles. This chain is Calcium-transporting ATPase 10, plasma membrane-type, found in Oryza sativa subsp. japonica (Rice).